We begin with the raw amino-acid sequence, 377 residues long: Succinyl-diaminopimelate desuccinylase (377 aa).

Histidine 67 is a binding site for Zn(2+). Aspartate 69 is a catalytic residue. Zn(2+) is bound at residue aspartate 100. Glutamate 134 (proton acceptor) is an active-site residue. Zn(2+)-binding residues include glutamate 135, glutamate 163, and histidine 349.

It belongs to the peptidase M20A family. DapE subfamily. Homodimer. Zn(2+) is required as a cofactor. Requires Co(2+) as cofactor.

The enzyme catalyses N-succinyl-(2S,6S)-2,6-diaminopimelate + H2O = (2S,6S)-2,6-diaminopimelate + succinate. It participates in amino-acid biosynthesis; L-lysine biosynthesis via DAP pathway; LL-2,6-diaminopimelate from (S)-tetrahydrodipicolinate (succinylase route): step 3/3. Functionally, catalyzes the hydrolysis of N-succinyl-L,L-diaminopimelic acid (SDAP), forming succinate and LL-2,6-diaminopimelate (DAP), an intermediate involved in the bacterial biosynthesis of lysine and meso-diaminopimelic acid, an essential component of bacterial cell walls. In Mannheimia succiniciproducens (strain KCTC 0769BP / MBEL55E), this protein is Succinyl-diaminopimelate desuccinylase.